Consider the following 235-residue polypeptide: 1-(5-phosphoribosyl)-5-[(5-phosphoribosylamino)methylideneamino] imidazole-4-carboxamide isomerase (235 aa).

D8 acts as the Proton acceptor in catalysis. Catalysis depends on D127, which acts as the Proton donor.

Belongs to the HisA/HisF family.

Its subcellular location is the cytoplasm. The catalysed reaction is 1-(5-phospho-beta-D-ribosyl)-5-[(5-phospho-beta-D-ribosylamino)methylideneamino]imidazole-4-carboxamide = 5-[(5-phospho-1-deoxy-D-ribulos-1-ylimino)methylamino]-1-(5-phospho-beta-D-ribosyl)imidazole-4-carboxamide. It participates in amino-acid biosynthesis; L-histidine biosynthesis; L-histidine from 5-phospho-alpha-D-ribose 1-diphosphate: step 4/9. This Aliarcobacter butzleri (strain RM4018) (Arcobacter butzleri) protein is 1-(5-phosphoribosyl)-5-[(5-phosphoribosylamino)methylideneamino] imidazole-4-carboxamide isomerase.